A 309-amino-acid chain; its full sequence is Phytoene synthase (309 aa).

This sequence belongs to the phytoene/squalene synthase family.

It carries out the reaction 2 (2E,6E,10E)-geranylgeranyl diphosphate = 15-cis-phytoene + 2 diphosphate. It functions in the pathway carotenoid biosynthesis; phytoene biosynthesis; all-trans-phytoene from geranylgeranyl diphosphate: step 1/1. In terms of biological role, catalyzes the reaction from prephytoene diphosphate to phytoene. In Arthrospira platensis (Spirulina platensis), this protein is Phytoene synthase (crtB).